The sequence spans 316 residues: Thiamine-monophosphate kinase (316 aa).

Asp26, Thr49, and Asp50 together coordinate Mg(2+). Residue Asp57 participates in substrate binding. Asp79 lines the Mg(2+) pocket. Residues Tyr109, 126–127, and Arg151 contribute to the ATP site; that span reads GD. Asp127 serves as a coordination point for Mg(2+). Asp198 lines the Mg(2+) pocket. Position 200 (Ser200) interacts with ATP. Asp201 contacts Mg(2+). 2 residues coordinate substrate: Glu251 and Phe305.

This sequence belongs to the thiamine-monophosphate kinase family.

It catalyses the reaction thiamine phosphate + ATP = thiamine diphosphate + ADP. It functions in the pathway cofactor biosynthesis; thiamine diphosphate biosynthesis; thiamine diphosphate from thiamine phosphate: step 1/1. Its function is as follows. Catalyzes the ATP-dependent phosphorylation of thiamine-monophosphate (TMP) to form thiamine-pyrophosphate (TPP), the active form of vitamin B1. The chain is Thiamine-monophosphate kinase from Rhodopirellula baltica (strain DSM 10527 / NCIMB 13988 / SH1).